Reading from the N-terminus, the 512-residue chain is MLTMGTALSQQVDANWQTYIMIAVYFLILIVIGFYGYKQATGNLSEYMLGGRSIGPYITALSAGASDMSGWMIMGLPGSVYSTGLSAMWITIGLTLGAYINYFVVAPRLRVYTELAGDAITLPDFFKNRLNDKNNVLKIISGLIIVVFFTLYTHSGFVSGGKLFESAFGLDYHFGLILVAFIVIFYTFFGGYLAVSITDFFQGVIMLIAMVMVPIVAMMNLNGWGTFHDVAAMKPTNLNLFKGLSFIGIISLFSWGLGYFGQPHIIIRFMSIKSHKMLPKARRLGISWMAVGLLGAVAVGLTGIAFVPAYHIKLEDPETLFIVMSQVLFHPLVGGFLLAAILAAIMSTISSQLLVTSSSLTEDFYKLIRGEEKAKTHQKEFVMIGRLSVLVVAIVAIAIAWNPNDTILNLVGNAWAGFGASFSPLVLFALYWKGLTRAGAVSGMVSGALVVIVWIAWIKPLAHINEIFGLYEIIPGFIVSVIVTYVVSKLTKKPGAFVETDLNKVRDIVREK.

13 helical membrane-spanning segments follow: residues 16–36, 54–74, 85–105, 139–159, 174–194, 200–220, 247–267, 286–306, 327–347, 381–401, 410–430, 438–458, and 467–487; these read WQTYIMIAVYFLILIVIGFYG, IGPYITALSAGASDMSGWMIM, LSAMWITIGLTLGAYINYFVV, IISGLIIVVFFTLYTHSGFVS, FGLILVAFIVIFYTFFGGYLA, FFQGVIMLIAMVMVPIVAMMN, IGIISLFSWGLGYFGQPHIII, ISWMAVGLLGAVAVGLTGIAF, VLFHPLVGGFLLAAILAAIMS, FVMIGRLSVLVVAIVAIAIAW, LVGNAWAGFGASFSPLVLFAL, AGAVSGMVSGALVVIVWIAWI, and IFGLYEIIPGFIVSVIVTYVV.

This sequence belongs to the sodium:solute symporter (SSF) (TC 2.A.21) family.

The protein resides in the cell membrane. It catalyses the reaction L-proline(in) + Na(+)(in) = L-proline(out) + Na(+)(out). Functionally, catalyzes the sodium-dependent uptake of extracellular L-proline. Since most S.aureus strains are L-proline auxotrophs, this transporter may aid the bacterial persistence during an infection of tissues with low proline concentrations. The polypeptide is Sodium/proline symporter (putP) (Staphylococcus aureus (strain USA300)).